The sequence spans 147 residues: Transcriptional regulator MraZ (147 aa).

SpoVT-AbrB domains lie at 6-48 and 77-120; these read NFER…NSEE and TVEV…SKAK.

The protein belongs to the MraZ family. In terms of assembly, forms oligomers.

The protein resides in the cytoplasm. It is found in the nucleoid. This is Transcriptional regulator MraZ from Mycoplasmopsis pulmonis (strain UAB CTIP) (Mycoplasma pulmonis).